Consider the following 336-residue polypeptide: Holliday junction branch migration complex subunit RuvB (336 aa).

Positions 4 to 184 (ADRLISAGTT…FGIVQRLEFY (181 aa)) are large ATPase domain (RuvB-L). ATP-binding positions include Ile-23, Arg-24, Gly-65, Lys-68, Thr-69, Thr-70, 131–133 (EDY), Arg-174, Tyr-184, and Arg-221. Thr-69 contributes to the Mg(2+) binding site. A small ATPAse domain (RuvB-S) region spans residues 185 to 255 (QVPDLQYIVS…IAAQALDMLN (71 aa)). A head domain (RuvB-H) region spans residues 258 to 336 (AEGFDYMDRK…HFGITPPEMP (79 aa)). Arg-294, Arg-313, and Arg-318 together coordinate DNA.

Belongs to the RuvB family. In terms of assembly, homohexamer. Forms an RuvA(8)-RuvB(12)-Holliday junction (HJ) complex. HJ DNA is sandwiched between 2 RuvA tetramers; dsDNA enters through RuvA and exits via RuvB. An RuvB hexamer assembles on each DNA strand where it exits the tetramer. Each RuvB hexamer is contacted by two RuvA subunits (via domain III) on 2 adjacent RuvB subunits; this complex drives branch migration. In the full resolvosome a probable DNA-RuvA(4)-RuvB(12)-RuvC(2) complex forms which resolves the HJ.

It is found in the cytoplasm. It catalyses the reaction ATP + H2O = ADP + phosphate + H(+). Its function is as follows. The RuvA-RuvB-RuvC complex processes Holliday junction (HJ) DNA during genetic recombination and DNA repair, while the RuvA-RuvB complex plays an important role in the rescue of blocked DNA replication forks via replication fork reversal (RFR). RuvA specifically binds to HJ cruciform DNA, conferring on it an open structure. The RuvB hexamer acts as an ATP-dependent pump, pulling dsDNA into and through the RuvAB complex. RuvB forms 2 homohexamers on either side of HJ DNA bound by 1 or 2 RuvA tetramers; 4 subunits per hexamer contact DNA at a time. Coordinated motions by a converter formed by DNA-disengaged RuvB subunits stimulates ATP hydrolysis and nucleotide exchange. Immobilization of the converter enables RuvB to convert the ATP-contained energy into a lever motion, pulling 2 nucleotides of DNA out of the RuvA tetramer per ATP hydrolyzed, thus driving DNA branch migration. The RuvB motors rotate together with the DNA substrate, which together with the progressing nucleotide cycle form the mechanistic basis for DNA recombination by continuous HJ branch migration. Branch migration allows RuvC to scan DNA until it finds its consensus sequence, where it cleaves and resolves cruciform DNA. The chain is Holliday junction branch migration complex subunit RuvB from Escherichia coli (strain ATCC 8739 / DSM 1576 / NBRC 3972 / NCIMB 8545 / WDCM 00012 / Crooks).